Reading from the N-terminus, the 180-residue chain is GTP cyclohydrolase 1 (180 aa).

The Zn(2+) site is built by C71, H74, and C142.

This sequence belongs to the GTP cyclohydrolase I family. As to quaternary structure, homomer.

The catalysed reaction is GTP + H2O = 7,8-dihydroneopterin 3'-triphosphate + formate + H(+). It participates in cofactor biosynthesis; 7,8-dihydroneopterin triphosphate biosynthesis; 7,8-dihydroneopterin triphosphate from GTP: step 1/1. This is GTP cyclohydrolase 1 from Helicobacter pylori (strain P12).